A 424-amino-acid polypeptide reads, in one-letter code: Myb family transcription factor RLI1 (424 aa).

Residues 144 to 165 (RPQKRDSGERTPLPPPSQQQHQ) form a disordered region. One can recognise an HTH myb-type domain in the interval 238–298 (APSKTRIRWT…HLQKYRIAKY (61 aa)). The segment at residues 269 to 294 (PKGILKLMNSDGLTIYHIKSHLQKYR) is a DNA-binding region (H-T-H motif). Residues 326-391 (MQITEALRVQ…ELDDVVAFAA (66 aa)) are a coiled coil. An LHEQLE motif is present at residues 342-347 (LHEQLE).

This sequence belongs to the MYB-CC family. Interacts with SPX1 and SPX2 in the nucleus; these interactions prevent binding to the promoters of target genes, thus regulating negatively leaf inclination in response to phosphate (Pi) starvation. As to quaternary structure, homodimer. Interacts with PHR2 in the nucleus. In terms of tissue distribution, mostly expressed in roots and leaves blades and, to a lower extent, in leaves sheaths, culms and panicles. Localized in leaves lamina joints. As to expression, expressed equally in shoots and roots. Mostly expressed in shoots and, to a lower extent, in roots.

The protein resides in the nucleus. In terms of biological role, transcription factor binding to specific DNA sequences of target genes promoters, such as the motif R1BS 5'-NAKATNCN-3' and the motif P1BS 5'-GNATATNC-3' to trigger their expression. Nitrate-induced component involved in modulating phosphate (Pi) response and homeostasis together with PHR2; activates directly the expression of Pi starvation-induced (PSI) genes upon nitrate disponibility, thus triggering the nitrate-induced phosphate response (NIPR) promoting Pi uptake activity. Its function is as follows. Binds preferentially to the P1BS motif 5'-GNATATNC-3' in target genes promoters. Binds preferentially to the R1BS motif 5'-NAKATNCN-3' in target genes promoters, including several genes involved in the plant hormone signal transduction pathway. Involved in the shoot architecture; positively regulates leaf inclination by affecting lamina joint cell elongation via the direct promotion of ILI4/BU1 and BC1 genes expression, especially in response to phosphate (Pi) availability. Regulates both brassinolide (BL) biosynthesis and signaling by directly activating BL-biosynthesis and signaling genes. This Oryza sativa subsp. japonica (Rice) protein is Myb family transcription factor RLI1.